We begin with the raw amino-acid sequence, 798 residues long: Integrin beta-7 (798 aa).

The N-terminal stretch at 1–19 is a signal peptide; sequence MVALPMVLVLLLVLSRGES. The Extracellular segment spans residues 20-723; the sequence is ELDAKIPSTG…VRPQEKGADH (704 aa). The PSI domain occupies 44-92; sequence SCQPAPSCQKCILSHPSCAWCKQLNFTASGEAEARRCARREELLARGCP. Intrachain disulfides connect Cys51/Cys476, Cys54/Cys80, Cys64/Cys91, Cys216/Cys223, Cys271/Cys311, Cys412/Cys428, and Cys448/Cys474. Asn68 carries an N-linked (GlcNAc...) asparagine glycan. The disordered stretch occupies residues 98-124; that stretch reads EPRGQQEVLQDQPLSQGARGEGATQLA. Residues 150–389 form the VWFA domain; that stretch reads YPVDLYYLMD…QLIMDAYNSL (240 aa). Mg(2+)-binding residues include Ser161 and Ser163. Residues Ser163, Asp166, Asp167, and Asp198 each contribute to the Ca(2+) site. Asn254, Asp256, Pro258, and Glu259 together coordinate Ca(2+). Glu259 is a Mg(2+) binding site. Asn279 carries N-linked (GlcNAc...) asparagine glycosylation. Positions 289 and 373 each coordinate Ca(2+). Asn434 carries N-linked (GlcNAc...) asparagine glycosylation. An N-linked (GlcNAc...) asparagine glycan is attached at Asn477. Intrachain disulfides connect Cys478–Cys497, Cys488–Cys500, Cys502–Cys511, Cys513–Cys545, Cys527–Cys543, Cys537–Cys548, Cys550–Cys559, Cys561–Cys582, Cys566–Cys580, Cys574–Cys585, Cys587–Cys596, Cys598–Cys621, Cys605–Cys619, Cys613–Cys624, Cys626–Cys635, Cys638–Cys641, Cys645–Cys688, Cys651–Cys670, and Cys654–Cys666. I-EGF domains lie at 478–512, 513–560, 561–597, and 598–636; these read CSDT…RLCE, CSVA…HLCE, CDDA…RACE, and CSGD…ALCD. N-linked (GlcNAc...) asparagine glycosylation is present at Asn531. Residue Asn590 is glycosylated (N-linked (GlcNAc...) asparagine). Residues Asn665 and Asn674 are each glycosylated (N-linked (GlcNAc...) asparagine). Residues 724-746 traverse the membrane as a helical segment; sequence TQAIVLGCVGGIVAVGLGLVLAY. The Cytoplasmic portion of the chain corresponds to 747 to 798; it reads RLSVEIYDRREYSRFEKEQQQLNWKQDSNPLYKSAITTTINPRFQEADSPTL. Tyr778 is modified (phosphotyrosine; by Tyr-kinases).

It belongs to the integrin beta chain family. In terms of assembly, heterodimer of an alpha and a beta subunit. ITGB7/beta-7 associates with either ITGA4/alpha-4 or ITGAE/alpha-E. Integrin ITGA4/ITGB7 interacts with MADCAM1. Integrin ITGA4/ITGB7 interacts with VCAM1 and fibronectin. Interacts with FLNA (via filamin repeats 4, 9, 12, 17, 19, 21, and 23). (Microbial infection) May interact with HIV-1 gp120. Expressed in a variety of leukocyte lines.

It is found in the cell membrane. Functionally, integrin ITGA4/ITGB7 (alpha-4/beta-7) (Peyer patches-specific homing receptor LPAM-1) is an adhesion molecule that mediates lymphocyte migration and homing to gut-associated lymphoid tissue (GALT). Integrin ITGA4/ITGB7 interacts with the cell surface adhesion molecules MADCAM1 which is normally expressed by the vascular endothelium of the gastrointestinal tract. Also interacts with VCAM1 and fibronectin, an extracellular matrix component. It recognizes one or more domains within the alternatively spliced CS-1 region of fibronectin. Interactions involve the tripeptide L-D-T in MADCAM1, and L-D-V in fibronectin. Integrin ITGAE/ITGB7 (alpha-E/beta-7, HML-1) is a receptor for E-cadherin. Its function is as follows. (Microbial infection) Binds to HIV-1 gp120, thereby allowing the virus to enter GALT, which is thought to be the major trigger of AIDS disease. Interaction would involve a tripeptide L-D-I in HIV-1 gp120. The polypeptide is Integrin beta-7 (ITGB7) (Homo sapiens (Human)).